The sequence spans 450 residues: uncharacterized protein (450 aa).

The next 12 helical transmembrane spans lie at 10 to 30 (IIVLLALSLLRINVIIALVIA), 53 to 73 (LGGGAEVAMNYAILGAFAIAI), 95 to 115 (TAGNLTWFKYFIFAVLALFAI), 120 to 140 (LLPVHIAFIPIVVPPLLSIFN), 148 to 168 (AVACVLTFGLTATYILLPVGF), 199 to 219 (LAMLLPVIGMILGLLTAIFIT), 242 to 262 (IANIKPKQIVASLIAIVATFA), 267 to 287 (TSSTIIGGLIGLIIFVLCGIF), 302 to 322 (LMAMIGFVMIAASGFANVINA), 343 to 363 (IAALLMLVVGLLITMGIGSSF), 378 to 398 (LSFGFSPLATISIVGVAAALG), and 428 to 448 (VVPTFIHYNIPLLVFGWIAAM).

It is found in the cell membrane. This is an uncharacterized protein from Haemophilus influenzae (strain ATCC 51907 / DSM 11121 / KW20 / Rd).